We begin with the raw amino-acid sequence, 165 residues long: Neuritin-like protein (165 aa).

The first 35 residues, 1 to 35 (MMRCCRRRCCCRQPPHALRPLLLLPLVLLPPLAAA), serve as a signal peptide directing secretion. A lipid anchor (GPI-anchor amidated alanine) is attached at Ala-139. A propeptide spans 140–165 (PALPMAPAPPLLAAALALAYLLRPLA) (removed in mature form).

The protein belongs to the neuritin family.

It localises to the cell membrane. This Homo sapiens (Human) protein is Neuritin-like protein (NRN1L).